We begin with the raw amino-acid sequence, 449 residues long: MSARKYFGTDGIRGRVGQGVISADFVLRLGNALGRVLTQGRSKRPLVLIGKDTRISGYMFEAALEAGLVAAGADVQLIGPMPTPAIAFLTSTLRADAGVVISASHNPHYDNGIKFFSAEGEKLDDATEAAIEAALDEPFHTVESERLGKAIRTRDAIGRYIEFCKASVARGFTLHGLKMVLDCAHGATYHIAPMLFRELGAEVVVIGAAPDGLNINAGVGSTHIDNLAAKVRECGAHLGIAFDGDGDRVLMADDQGNPVDGDDLLYVLARSWQASGRLTGTVVGTLMTNYGLEQALAALHIPFQRAKVGDRYVHQALVEGGGTLGGETSGHLLCLDRASTGDGIVSALQVLEALGRDGQSLREALASLSKVPQKTVNVRLDGGTAKAIVEAVNVQQALQQAQAAVQGRGRAFLRPSGTEPVVRVTVEADDAGLMQDTLDRLSGAVRDAA.

The Phosphoserine intermediate role is filled by Ser-104. 4 residues coordinate Mg(2+): Ser-104, Asp-243, Asp-245, and Asp-247. Ser-104 carries the post-translational modification Phosphoserine.

Belongs to the phosphohexose mutase family. The cofactor is Mg(2+). In terms of processing, activated by phosphorylation.

The catalysed reaction is alpha-D-glucosamine 1-phosphate = D-glucosamine 6-phosphate. In terms of biological role, catalyzes the conversion of glucosamine-6-phosphate to glucosamine-1-phosphate. The polypeptide is Phosphoglucosamine mutase (Xanthomonas euvesicatoria pv. vesicatoria (strain 85-10) (Xanthomonas campestris pv. vesicatoria)).